Here is a 183-residue protein sequence, read N- to C-terminus: MDALELLINRRSASRLAEPAPTGEQLQNILRAGMRAPDHKSMQPWHFFVIEGEGRERFSAVLEQGAIAAGSDDKAIDKARNAPFRAPLIITVVAKCEENHKVPRWEQEMSAGCAVMAMQMAAVAQGFGGIWRSGALTESPVVREAFGCREQDKIVGFLYLGTPQLKASTSINVPDPTPFVTYF.

FMN is bound by residues 10–12, arginine 35, and histidine 39; that span reads RRS. An NAD(+)-binding site is contributed by 121–126; sequence AAVAQG. 131–133 lines the FMN pocket; that stretch reads WRS.

This sequence belongs to the nitroreductase family. In terms of assembly, homodimer. Requires FMN as cofactor.

The polypeptide is Putative NAD(P)H nitroreductase YdjA (ydjA) (Escherichia coli O157:H7).